Consider the following 556-residue polypeptide: Polypeptide N-acetylgalactosaminyltransferase 13 (556 aa).

Residues 1 to 4 lie on the Cytoplasmic side of the membrane; the sequence is MRRF. A helical; Signal-anchor for type II membrane protein transmembrane segment spans residues 5 to 27; it reads VYCKVVLATSLMWVLVDVFLLLY. Topologically, residues 28 to 556 are lumenal; it reads FSECNKCDDK…WLLRNMTLGT (529 aa). N-linked (GlcNAc...) asparagine glycans are attached at residues Asn-94 and Asn-116. Intrachain disulfides connect Cys-105–Cys-338, Cys-329–Cys-407, Cys-441–Cys-458, Cys-481–Cys-496, and Cys-522–Cys-539. Residues 114-224 form a catalytic subdomain A region; sequence LPNTSVVIVF…LGWLEPLLAR (111 aa). The substrate site is built by Asp-155 and Arg-185. Residues Asp-208 and His-210 each coordinate Mn(2+). The segment at 284 to 346 is catalytic subdomain B; it reads PVRTPTMAGG…TCSHVGHVFR (63 aa). Residue Trp-315 participates in substrate binding. His-343 serves as a coordination point for Mn(2+). Residues Arg-346 and Tyr-351 each contribute to the substrate site. The region spanning 428–550 is the Ricin B-type lectin domain; sequence YSLGEIRNVE…GSRSQQWLLR (123 aa). Asn-551 carries an N-linked (GlcNAc...) asparagine glycan.

The protein belongs to the glycosyltransferase 2 family. GalNAc-T subfamily. Mn(2+) serves as cofactor. In terms of tissue distribution, specifically expressed in neuronal cells. Not expressed in glial cells such as astrocytes. Expressed at low level.

The protein resides in the golgi apparatus membrane. It catalyses the reaction L-seryl-[protein] + UDP-N-acetyl-alpha-D-galactosamine = a 3-O-[N-acetyl-alpha-D-galactosaminyl]-L-seryl-[protein] + UDP + H(+). It carries out the reaction L-threonyl-[protein] + UDP-N-acetyl-alpha-D-galactosamine = a 3-O-[N-acetyl-alpha-D-galactosaminyl]-L-threonyl-[protein] + UDP + H(+). It participates in protein modification; protein glycosylation. Catalyzes the initial reaction in O-linked oligosaccharide biosynthesis, the transfer of an N-acetyl-D-galactosamine (GalNAc) residue from UDP-GalNAc to a serine or threonine residue on the protein receptor. Generates GalNAc-O-Ser/Thr structure also known as Tn antigen, which itself is immunogenic but also serves as a precursor for the synthesis of different mucin-type O-glycan core structures. Contributes to the synthesis of O-linked glycans on mucins and proteoglycans of the central nervous system. Can glycosylate both unmodified peptides and glycopeptides that already contain an O-linked GalNAc sugar. Transfers GalNAc to Thr-/Ser-rich tandem repeats GTTPSPVPTTSTTSAP of MUC5AC. Transfers GalNAc to three consecutive serine/threonine residues on SDC3 forming a triplet-Tn epitope expressed in Purkinje cells of the developing brain. May promote neurogenesis through glycosylation and stabilization of PDPN. In Mus musculus (Mouse), this protein is Polypeptide N-acetylgalactosaminyltransferase 13 (Galnt13).